Consider the following 214-residue polypeptide: ATP-dependent Clp protease proteolytic subunit (214 aa).

Catalysis depends on S113, which acts as the Nucleophile. H138 is an active-site residue.

Belongs to the peptidase S14 family. As to quaternary structure, fourteen ClpP subunits assemble into 2 heptameric rings which stack back to back to give a disk-like structure with a central cavity, resembling the structure of eukaryotic proteasomes.

The protein localises to the cytoplasm. The enzyme catalyses Hydrolysis of proteins to small peptides in the presence of ATP and magnesium. alpha-casein is the usual test substrate. In the absence of ATP, only oligopeptides shorter than five residues are hydrolyzed (such as succinyl-Leu-Tyr-|-NHMec, and Leu-Tyr-Leu-|-Tyr-Trp, in which cleavage of the -Tyr-|-Leu- and -Tyr-|-Trp bonds also occurs).. Its function is as follows. Cleaves peptides in various proteins in a process that requires ATP hydrolysis. Has a chymotrypsin-like activity. Plays a major role in the degradation of misfolded proteins. The sequence is that of ATP-dependent Clp protease proteolytic subunit from Alkalilimnicola ehrlichii (strain ATCC BAA-1101 / DSM 17681 / MLHE-1).